The primary structure comprises 398 residues: 1-deoxy-D-xylulose 5-phosphate reductoisomerase (398 aa).

Residues threonine 11, glycine 12, serine 13, isoleucine 14, arginine 38, asparagine 39, and asparagine 125 each coordinate NADPH. A 1-deoxy-D-xylulose 5-phosphate-binding site is contributed by lysine 126. Glutamate 127 serves as a coordination point for NADPH. Mn(2+) is bound at residue aspartate 151. 1-deoxy-D-xylulose 5-phosphate-binding residues include serine 152, glutamate 153, serine 179, and histidine 202. Glutamate 153 is a binding site for Mn(2+). NADPH is bound at residue glycine 208. Residues serine 215, asparagine 220, lysine 221, and glutamate 224 each contribute to the 1-deoxy-D-xylulose 5-phosphate site. Mn(2+) is bound at residue glutamate 224.

The protein belongs to the DXR family. Mg(2+) serves as cofactor. It depends on Mn(2+) as a cofactor.

It carries out the reaction 2-C-methyl-D-erythritol 4-phosphate + NADP(+) = 1-deoxy-D-xylulose 5-phosphate + NADPH + H(+). Its pathway is isoprenoid biosynthesis; isopentenyl diphosphate biosynthesis via DXP pathway; isopentenyl diphosphate from 1-deoxy-D-xylulose 5-phosphate: step 1/6. Catalyzes the NADPH-dependent rearrangement and reduction of 1-deoxy-D-xylulose-5-phosphate (DXP) to 2-C-methyl-D-erythritol 4-phosphate (MEP). The sequence is that of 1-deoxy-D-xylulose 5-phosphate reductoisomerase from Burkholderia mallei (strain NCTC 10247).